Consider the following 157-residue polypeptide: Biotin carboxyl carrier protein of acetyl-CoA carboxylase (157 aa).

A Biotinyl-binding domain is found at 80–156; it reads YATIVSPMVG…DCGQALMKVE (77 aa). Position 122 is an N6-biotinyllysine (lysine 122).

It is found in the plastid. The protein resides in the chloroplast. It functions in the pathway lipid metabolism; fatty acid biosynthesis. Its function is as follows. This protein is a component of the acetyl coenzyme A carboxylase complex; first, biotin carboxylase catalyzes the carboxylation of the carrier protein and then the transcarboxylase transfers the carboxyl group to form malonyl-CoA. This is Biotin carboxyl carrier protein of acetyl-CoA carboxylase (accB) from Porphyra purpurea (Red seaweed).